The chain runs to 594 residues: DNA polymerase epsilon subunit B (594 aa).

The protein belongs to the DNA polymerase epsilon subunit B family. As to quaternary structure, heterotetramer. Consists of four subunits: pol2, dpb2, dpb3 and dpb4. Interacts with dpb3.

It localises to the nucleus. Its function is as follows. As accessory component of the DNA polymerase epsilon (DNA polymerase II) participates in chromosomal DNA replication. The chain is DNA polymerase epsilon subunit B (dpb2) from Schizosaccharomyces pombe (strain 972 / ATCC 24843) (Fission yeast).